Consider the following 245-residue polypeptide: tRNA1(Val) (adenine(37)-N6)-methyltransferase (245 aa).

The protein belongs to the methyltransferase superfamily. tRNA (adenine-N(6)-)-methyltransferase family.

It localises to the cytoplasm. The catalysed reaction is adenosine(37) in tRNA1(Val) + S-adenosyl-L-methionine = N(6)-methyladenosine(37) in tRNA1(Val) + S-adenosyl-L-homocysteine + H(+). Its function is as follows. Specifically methylates the adenine in position 37 of tRNA(1)(Val) (anticodon cmo5UAC). This Salmonella paratyphi A (strain ATCC 9150 / SARB42) protein is tRNA1(Val) (adenine(37)-N6)-methyltransferase.